The primary structure comprises 960 residues: MRVPEKYSTLPAEDRSVHIVNICAIEDLGYLPSEGTLLNSLSVDPDAECKYGLYFRDGKRKVDYILVYHHKRASGSRTLARRGLQNDMVLGTRSVRQDQPLPGKGSPVDAGSPEVPMDYHEDDKRFRREEYEGNLLEAGLELENDEDTKIHGVGFVKIHAPWHVLCREAEFLKLKMPTKKVYHISETRGLLKTINSVLQKITDPIQPKVAEHRPQTTKRLSYPFSREKQHLFDLTDRDSFFDSKTRSTIVYEILKRTTCTKAKYSMGITSLLANGVYSAAYPLHDGDYEGDNVEFNDRKLLYEEWASYGVFYKYQPIDLVRKYFGEKVGLYFAWLGAYTQMLIPASIVGVIVFLYGCATVDENIPSMEMCDQRYNITMCPLCDKTCSYWKMSSACATARASHLFDNPATVFFSVFMALWAATFMEHWKRKQMRLNYRWDLTGFEEEEEAVKDHPRAEYEARVLEKSLRKESRNKETDKVKLTWRDRFPAYFTNLVSIIFMIAVTFAIVLGVIIYRISTAAALAMNSSPSVRSNIRVTVTATAVIINLVVIILLDEVYGCIARWLTKIEVPKTEKSFEERLTFKAFLLKFVNSYTPIFYVAFFKGRFVGRPGDYVYIFRSFRMEECAPGGCLMELCIQLSIIMLGKQLIQNNLFEIGIPKMKKFIRYLKLRRQSPSDREEYVKRKQRYEVDFNLEPFAGLTPEYMEMIIQFGFVTLFVASFPLAPLFALLNNIIEIRLDAKKFVTELRRPVAIRAKDIGIWYNILRGVGKLAVIINAFVISFTSDFIPRLVYLYMYSQNGTMHGFVNHTLSSFNVSDFQNGTAPNDPLDLGYEVQICRYKDYREPPWSEHKYDISKDFWAVLAARLAFVIVFQNLVMFMSDFVDWVIPDIPKDISQQIHKEKVLMVELFMREEQGKQQLLDTWMEKEKPRDVPCNNHSPTTHPEAGDGSPVPSYEYHGDAL.

At 1 to 333 the chain is on the cytoplasmic side; the sequence is MRVPEKYSTL…FGEKVGLYFA (333 aa). The disordered stretch occupies residues 92–115; it reads TRSVRQDQPLPGKGSPVDAGSPEV. Phosphoserine is present on Ser-196. Residues 334-354 form a helical membrane-spanning segment; it reads WLGAYTQMLIPASIVGVIVFL. Residues 355–406 are Extracellular-facing; sequence YGCATVDENIPSMEMCDQRYNITMCPLCDKTCSYWKMSSACATARASHLFDN. 4 disulfides stabilise this stretch: Cys-370–Cys-395, Cys-379–Cys-836, Cys-382–Cys-386, and Cys-625–Cys-630. Residues 407-427 form a helical membrane-spanning segment; sequence PATVFFSVFMALWAATFMEHW. A Ca(2+)-binding site is contributed by Glu-425. The Cytoplasmic portion of the chain corresponds to 428 to 493; it reads KRKQMRLNYR…RDRFPAYFTN (66 aa). A helical transmembrane segment spans residues 494–514; it reads LVSIIFMIAVTFAIVLGVIIY. Residues 515–542 are Extracellular-facing; sequence RISTAAALAMNSSPSVRSNIRVTVTATA. The helical transmembrane segment at 543–563 threads the bilayer; that stretch reads VIINLVVIILLDEVYGCIARW. Residues 564-581 lie on the Cytoplasmic side of the membrane; it reads LTKIEVPKTEKSFEERLT. The helical transmembrane segment at 582 to 602 threads the bilayer; it reads FKAFLLKFVNSYTPIFYVAFF. The Extracellular segment spans residues 603–631; sequence KGRFVGRPGDYVYIFRSFRMEECAPGGCL. The chain crosses the membrane as a helical span at residues 632–652; the sequence is MELCIQLSIIMLGKQLIQNNL. Ca(2+) is bound by residues Asn-651, Glu-654, Glu-702, Glu-705, Glu-734, and Asp-738. At 653-699 the chain is on the cytoplasmic side; sequence FEIGIPKMKKFIRYLKLRRQSPSDREEYVKRKQRYEVDFNLEPFAGL. 2 consecutive transmembrane segments (helical) span residues 700–720 and 721–741; these read TPEY…VASF and PLAP…DAKK. Topologically, residues 742–758 are cytoplasmic; that stretch reads FVTELRRPVAIRAKDIG. The chain crosses the membrane as a helical span at residues 759-779; sequence IWYNILRGVGKLAVIINAFVI. The Extracellular portion of the chain corresponds to 780-866; that stretch reads SFTSDFIPRL…FWAVLAARLA (87 aa). The N-linked (GlcNAc...) asparagine glycan is linked to Asn-806. Residues 867–887 traverse the membrane as a helical segment; the sequence is FVIVFQNLVMFMSDFVDWVIP. Positions 883 and 888 each coordinate Ca(2+). The Cytoplasmic segment spans residues 888–960; it reads DIPKDISQQI…PSYEYHGDAL (73 aa). Residues 928–960 form a disordered region; it reads PRDVPCNNHSPTTHPEAGDGSPVPSYEYHGDAL.

Belongs to the anoctamin family. As to quaternary structure, homodimer. Interacts with CFTR. Interacts with TRPV4. In terms of tissue distribution, expressed at the apical surface of the vomeronasal epithelium (at protein level). Expressed in the lateral and septal nasal glands (at protein level). Highly expressed in pulmonary bronchiole epithelial cells, pancreatic and submandibular gland acinar cells, kidney proximal tubule, all retinal cell layers, most sensory cells of dorsal root ganglia, Leydig cells and spermatocytes (at protein level). In the dorsal root ganglia, detected in small-diameter nociceptive neurons and in larger myelinated neurons (at protein level). In the dorsal root ganglia, expressed in MrgprA3-positive neurons (at protein level). In the developing brain, highly expressed in the ventricular zone and subventricular zone at 12.5 dpc and 14.5 dpc where it is detected in radial glial cells but not in neurons with expression dramatically decreased at P1 (at protein level). Highly expressed in the endometrial stroma (at protein level). In taste buds of the vallate papillae, expressed in the apical region of type I taste cells (at protein level). In the kidney, expressed in the collecting duct (at protein level). In the retina, strongly expressed in the outer and inner plexiform layers, weakly expressed in some somata in the inner nuclear layer and ganglion cell layer and not expressed in the outer nuclear layer (at protein level). Expressed in various retinal neurons including rod bipolar cells (at protein level). Expressed in eye, brain, myometrium and endometrium with higher levels in endometrium than myometrium in estrus and day 18 pregnant mice. Not detected in uterine smooth muscle cells. Expressed at high levels in the thyroid gland and gastrointestinal muscles.

Its subcellular location is the apical cell membrane. It localises to the presynapse. The catalysed reaction is chloride(in) = chloride(out). Its activity is regulated as follows. ATP and calmodulin are essential for its activation. Channel activity is inhibited by CFTR protein and by chloride inhibitors such as niflumic acid (NFA) and 4,4'-diisothiocyanatostilbene-2,2'-disulfonic acid (DIDS). Activated by heat with activation seen at temperatures above 44 degrees Celsius. Activated by BDNF in radial glial cells. Calcium-activated chloride channel (CaCC). Plays a role in transepithelial anion transport and smooth muscle contraction. Required for the normal functioning of the interstitial cells of Cajal (ICCs) which generate electrical pacemaker activity in gastrointestinal smooth muscles. Acts as a major contributor to basal and stimulated chloride conductance in airway epithelial cells and plays an important role in tracheal cartilage development. Required for CFTR activation by enhancing endoplasmic reticulum Ca(2+) store release and is also required for CFTR membrane expression. Required for basal and ATP-dependent mucus secretion in airways and intestine, probably by controlling exocytosis of mucus-filled granules by providing Ca(2+) to an apical signaling compartment. Contributes to airway mucus expression induced by interleukins IL3 and IL8 and by the asthma-associated protein CLCA1 and is required for expression of mucin MUC5AC. However, was shown in another study not to be required for MUC5AC expression. Plays a role in the propagation of Ca(2+) waves in Kolliker's organ in the cochlea and contributes to the refinement of auditory brainstem circuitries prior to hearing onset. In vomeronasal sensory neurons, modulates spontaneous firing patterns in the absence of stimuli as well as the firing pattern of pheromone-evoked activity. Responsible for calcium-activated chloride channel activity in type I taste cells of the vallate papillae. Acts as a heat sensor in nociceptive neurons. In dorsal root ganglion neurons, plays a role in mediating non-histaminergic Mas-related G-protein coupled receptor (MRGPR)-dependent itching, acting as a downstream effector of MRGPRs. In the developing brain, required for the Ca(2+)-dependent process extension of radial glial cells. This Mus musculus (Mouse) protein is Anoctamin-1 (Ano1).